Reading from the N-terminus, the 289-residue chain is uncharacterized protein (289 aa).

The interval 268 to 289 is disordered; that stretch reads SDDGYETQWSDGPYSIPSGLSD.

This is an uncharacterized protein from Zea mays (Maize).